Reading from the N-terminus, the 84-residue chain is Small ribosomal subunit protein uS17 (84 aa).

The protein belongs to the universal ribosomal protein uS17 family. In terms of assembly, part of the 30S ribosomal subunit.

Functionally, one of the primary rRNA binding proteins, it binds specifically to the 5'-end of 16S ribosomal RNA. The sequence is that of Small ribosomal subunit protein uS17 from Alkaliphilus metalliredigens (strain QYMF).